The primary structure comprises 483 residues: Acyl-coenzyme A thioesterase 2, mitochondrial (483 aa).

Position 104 is an N6-acetyllysine (lysine 104). Residues serine 294, aspartate 388, and histidine 422 each act as charge relay system in the active site. Position 470 is an N6-succinyllysine (lysine 470). The short motif at 481–483 (SKV) is the Microbody targeting signal element.

This sequence belongs to the C/M/P thioester hydrolase family. Monomer. In terms of tissue distribution, strongest expression in heart, liver, muscle and kidney. Weak in placenta and pancreas.

It localises to the mitochondrion. It carries out the reaction hexadecanoyl-CoA + H2O = hexadecanoate + CoA + H(+). It catalyses the reaction tetradecanoyl-CoA + H2O = tetradecanoate + CoA + H(+). The enzyme catalyses octadecanoyl-CoA + H2O = octadecanoate + CoA + H(+). The catalysed reaction is eicosanoyl-CoA + H2O = eicosanoate + CoA + H(+). It carries out the reaction decanoyl-CoA + H2O = decanoate + CoA + H(+). It catalyses the reaction dodecanoyl-CoA + H2O = dodecanoate + CoA + H(+). The enzyme catalyses (9Z)-octadecenoyl-CoA + H2O = (9Z)-octadecenoate + CoA + H(+). The catalysed reaction is (9Z)-hexadecenoyl-CoA + H2O = (9Z)-hexadecenoate + CoA + H(+). It carries out the reaction (9E)-octadecenoyl-CoA + H2O = (9E)-octadecenoate + CoA + H(+). It catalyses the reaction (9Z,12Z)-octadecadienoyl-CoA + H2O = (9Z,12Z)-octadecadienoate + CoA + H(+). It functions in the pathway lipid metabolism; fatty acid metabolism. In terms of biological role, catalyzes the hydrolysis of acyl-CoAs into free fatty acids and coenzyme A (CoASH), regulating their respective intracellular levels. Displays higher activity toward long chain acyl CoAs (C14-C20). The enzyme is involved in enhancing the hepatic fatty acid oxidation in mitochondria. The polypeptide is Acyl-coenzyme A thioesterase 2, mitochondrial (ACOT2) (Homo sapiens (Human)).